Consider the following 597-residue polypeptide: Cytosolic Fe-S cluster assembly factor nar1 (597 aa).

Cys20 lines the [4Fe-4S] cluster pocket. Residues 25-46 (ESLPQKESQSENPYEVTKEDKV) are disordered. [4Fe-4S] cluster-binding residues include Cys61, Cys64, Cys67, Cys208, and Cys263. The segment at 424-449 (RLPGAKPQAVSSSANRRQPMSRNAAP) is disordered. Over residues 432 to 444 (AVSSSANRRQPMS) the composition is skewed to polar residues. Residues Cys464 and Cys468 each contribute to the [4Fe-4S] cluster site.

The protein belongs to the NARF family.

Its function is as follows. Component of the cytosolic Fe/S protein assembly machinery. Required for maturation of extramitochondrial Fe/S proteins. May play a role in the transfer of pre-assembled Fe/S clusters to target apoproteins. This is Cytosolic Fe-S cluster assembly factor nar1 (nar1) from Aspergillus fumigatus (strain ATCC MYA-4609 / CBS 101355 / FGSC A1100 / Af293) (Neosartorya fumigata).